Reading from the N-terminus, the 179-residue chain is Large ribosomal subunit protein uL6 (179 aa).

It belongs to the universal ribosomal protein uL6 family. Part of the 50S ribosomal subunit.

This protein binds to the 23S rRNA, and is important in its secondary structure. It is located near the subunit interface in the base of the L7/L12 stalk, and near the tRNA binding site of the peptidyltransferase center. The sequence is that of Large ribosomal subunit protein uL6 from Geobacter metallireducens (strain ATCC 53774 / DSM 7210 / GS-15).